The following is a 403-amino-acid chain: Tryptophan synthase beta chain (403 aa).

At Lys-88 the chain carries N6-(pyridoxal phosphate)lysine.

Belongs to the TrpB family. Tetramer of two alpha and two beta chains. The cofactor is pyridoxal 5'-phosphate.

It catalyses the reaction (1S,2R)-1-C-(indol-3-yl)glycerol 3-phosphate + L-serine = D-glyceraldehyde 3-phosphate + L-tryptophan + H2O. It functions in the pathway amino-acid biosynthesis; L-tryptophan biosynthesis; L-tryptophan from chorismate: step 5/5. Its function is as follows. The beta subunit is responsible for the synthesis of L-tryptophan from indole and L-serine. The chain is Tryptophan synthase beta chain from Shewanella frigidimarina (strain NCIMB 400).